A 238-amino-acid chain; its full sequence is Orotidine 5'-phosphate decarboxylase (238 aa).

Residues Asp-10, Lys-32, 59–68 (DLKLHDIPNT), Thr-122, Arg-184, Gln-193, Gly-213, and Arg-214 contribute to the substrate site. The active-site Proton donor is the Lys-61.

This sequence belongs to the OMP decarboxylase family. Type 1 subfamily. Homodimer.

It carries out the reaction orotidine 5'-phosphate + H(+) = UMP + CO2. It functions in the pathway pyrimidine metabolism; UMP biosynthesis via de novo pathway; UMP from orotate: step 2/2. Functionally, catalyzes the decarboxylation of orotidine 5'-monophosphate (OMP) to uridine 5'-monophosphate (UMP). This is Orotidine 5'-phosphate decarboxylase from Bacillus anthracis (strain A0248).